Reading from the N-terminus, the 93-residue chain is MVGEMPALKDLVLQLEPSVLDLDLYCYEEVPPDDIEEELVSPQQPYAVVASCAYCEKLVRLTVLADHSAIRQLEELLLRSLNIVCPLCTLQRQ.

The E7 terminal domain stretch occupies residues 1-41 (MVGEMPALKDLVLQLEPSVLDLDLYCYEEVPPDDIEEELVS). Residues 24 to 28 (LYCYE) carry the LXCXE motif; interaction with host RB1 and TMEM173/STING motif. Residues 52-88 (CAYCEKLVRLTVLADHSAIRQLEELLLRSLNIVCPLC) fold into a zinc finger. The Nuclear export signal motif lies at 70–78 (IRQLEELLL).

The protein belongs to the papillomaviridae E7 protein family. As to quaternary structure, homodimer. Homooligomer. Interacts with host RB1; this interaction induces dissociation of RB1-E2F1 complex thereby disrupting RB1 activity. Interacts with host EP300; this interaction represses EP300 transcriptional activity. Interacts with protein E2; this interaction inhibits E7 oncogenic activity. Interacts with host TMEM173/STING; this interaction impairs the ability of TMEM173/STING to sense cytosolic DNA and promote the production of type I interferon (IFN-alpha and IFN-beta). Post-translationally, highly phosphorylated.

It is found in the host cytoplasm. The protein localises to the host nucleus. Plays a role in viral genome replication by driving entry of quiescent cells into the cell cycle. Stimulation of progression from G1 to S phase allows the virus to efficiently use the cellular DNA replicating machinery to achieve viral genome replication. E7 protein has both transforming and trans-activating activities. Induces the disassembly of the E2F1 transcription factor from RB1, with subsequent transcriptional activation of E2F1-regulated S-phase genes. Interferes with host histone deacetylation mediated by HDAC1 and HDAC2, leading to transcription activation. Also plays a role in the inhibition of both antiviral and antiproliferative functions of host interferon alpha. Interaction with host TMEM173/STING impairs the ability of TMEM173/STING to sense cytosolic DNA and promote the production of type I interferon (IFN-alpha and IFN-beta). This chain is Protein E7, found in Homo sapiens (Human).